A 546-amino-acid polypeptide reads, in one-letter code: Methionine--tRNA ligase (546 aa).

The 'HIGH' region motif lies at 15–25 (PYANGPIHLGH). Cysteine 146, cysteine 149, cysteine 159, and cysteine 162 together coordinate Zn(2+). The short motif at 332-336 (KMSKS) is the 'KMSKS' region element. Lysine 335 serves as a coordination point for ATP.

It belongs to the class-I aminoacyl-tRNA synthetase family. MetG type 1 subfamily. As to quaternary structure, monomer. It depends on Zn(2+) as a cofactor.

It localises to the cytoplasm. It catalyses the reaction tRNA(Met) + L-methionine + ATP = L-methionyl-tRNA(Met) + AMP + diphosphate. Is required not only for elongation of protein synthesis but also for the initiation of all mRNA translation through initiator tRNA(fMet) aminoacylation. The polypeptide is Methionine--tRNA ligase (Coxiella burnetii (strain RSA 331 / Henzerling II)).